An 85-amino-acid chain; its full sequence is Small ribosomal subunit protein bS18 (85 aa).

Residues 1–12 show a composition bias toward gly residues; that stretch reads MAFAQAGGGGGQ. The segment at 1 to 22 is disordered; the sequence is MAFAQAGGGGGQRRPFFRRRKT.

It belongs to the bacterial ribosomal protein bS18 family. In terms of assembly, part of the 30S ribosomal subunit. Forms a tight heterodimer with protein bS6.

Functionally, binds as a heterodimer with protein bS6 to the central domain of the 16S rRNA, where it helps stabilize the platform of the 30S subunit. This chain is Small ribosomal subunit protein bS18, found in Azorhizobium caulinodans (strain ATCC 43989 / DSM 5975 / JCM 20966 / LMG 6465 / NBRC 14845 / NCIMB 13405 / ORS 571).